The chain runs to 24 residues: Defensin D5 (24 aa).

It belongs to the DEFL family. Group IV subfamily. Distributed in the epidermal cell layer of leaves and in the subepidermal layer region of stems. Not in roots.

It localises to the secreted. The protein localises to the cell wall. Functionally, antimicrobial peptide. Active against Fusarium spp., Gram-positive and Gram-negative bacterial pathogens. This is Defensin D5 from Spinacia oleracea (Spinach).